The primary structure comprises 509 residues: Glycogen synthase (509 aa).

Lys47 lines the ADP-alpha-D-glucose pocket.

This sequence belongs to the glycosyltransferase 1 family. Bacterial/plant glycogen synthase subfamily.

It catalyses the reaction [(1-&gt;4)-alpha-D-glucosyl](n) + ADP-alpha-D-glucose = [(1-&gt;4)-alpha-D-glucosyl](n+1) + ADP + H(+). It participates in glycan biosynthesis; glycogen biosynthesis. Its function is as follows. Synthesizes alpha-1,4-glucan chains using ADP-glucose. The polypeptide is Glycogen synthase (Xanthomonas euvesicatoria pv. vesicatoria (strain 85-10) (Xanthomonas campestris pv. vesicatoria)).